A 314-amino-acid chain; its full sequence is Cytochrome f (314 aa).

The N-terminal stretch at 1–30 (MATNKFFKSLLFTLTIAISSFGFCVENSSA) is a signal peptide. Heme-binding residues include Y31, C51, C54, and H55. A helical membrane pass occupies residues 280-300 (ILGYLAFCFCLLLTQVLLVLK).

The protein belongs to the cytochrome f family. In terms of assembly, the 4 large subunits of the cytochrome b6-f complex are cytochrome b6, subunit IV (17 kDa polypeptide, petD), cytochrome f and the Rieske protein, while the 4 small subunits are PetG, PetL, PetM and PetN. The complex functions as a dimer. Requires heme as cofactor.

The protein localises to the plastid. Its subcellular location is the chloroplast thylakoid membrane. Its function is as follows. Component of the cytochrome b6-f complex, which mediates electron transfer between photosystem II (PSII) and photosystem I (PSI), cyclic electron flow around PSI, and state transitions. The protein is Cytochrome f of Thalassiosira pseudonana (Marine diatom).